Consider the following 538-residue polypeptide: Cytochrome c-552 (538 aa).

An N-terminal signal peptide occupies residues 1 to 55; it reads MKIYLRFVWILIIILNFLLNLFITTNGVIIVNAFKKSLIVAASFASLSLFNSATA. Residue His133 coordinates heme c. Residues Cys161, Cys164, and Lys165 each coordinate heme. Positions 199, 202, 203, 264, 267, and 268 each coordinate heme c. Ca(2+) contacts are provided by Glu270, Tyr271, Lys316, and Gln318. Position 271 (Tyr271) interacts with substrate. His319 provides a ligand contact to substrate. Residues His330, Cys337, Cys340, His341, His356, Cys369, Cys372, His373, and His448 each contribute to the heme c site.

This sequence belongs to the cytochrome c-552 family. Ca(2+) serves as cofactor. The cofactor is heme c.

The protein resides in the periplasm. It carries out the reaction 6 Fe(III)-[cytochrome c] + NH4(+) + 2 H2O = 6 Fe(II)-[cytochrome c] + nitrite + 8 H(+). It participates in nitrogen metabolism; nitrate reduction (assimilation). In terms of biological role, catalyzes the reduction of nitrite to ammonia, consuming six electrons in the process. This Haemophilus influenzae (strain 86-028NP) protein is Cytochrome c-552.